Here is a 91-residue protein sequence, read N- to C-terminus: Small ribosomal subunit protein uS19m (91 aa).

It belongs to the universal ribosomal protein uS19 family. Component of the mitochondrial small ribosomal subunit (mt-SSU). Mature yeast 74S mitochondrial ribosomes consist of a small (37S) and a large (54S) subunit. The 37S small subunit contains a 15S ribosomal RNA (15S mt-rRNA) and 34 different proteins. The 54S large subunit contains a 21S rRNA (21S mt-rRNA) and 46 different proteins.

The protein localises to the mitochondrion. Component of the mitochondrial ribosome (mitoribosome), a dedicated translation machinery responsible for the synthesis of mitochondrial genome-encoded proteins, including at least some of the essential transmembrane subunits of the mitochondrial respiratory chain. The mitoribosomes are attached to the mitochondrial inner membrane and translation products are cotranslationally integrated into the membrane. The polypeptide is Small ribosomal subunit protein uS19m (RSM19) (Saccharomyces cerevisiae (strain ATCC 204508 / S288c) (Baker's yeast)).